Reading from the N-terminus, the 491-residue chain is Ketol-acid reductoisomerase (NADP(+)) (491 aa).

Residues 15–208 (AQLGKCRFMG…GGHRAGVLES (194 aa)) form the KARI N-terminal Rossmann domain. NADP(+)-binding positions include 45-48 (CGAQ), Arg-68, Arg-76, Ser-78, and 108-110 (DKQ). Residue His-132 is part of the active site. Gly-158 lines the NADP(+) pocket. KARI C-terminal knotted domains follow at residues 209-344 (SFVA…TAPQ) and 345-484 (YEGK…MTDM). The Mg(2+) site is built by Asp-217, Glu-221, Glu-389, and Glu-393. Substrate is bound at residue Ser-414.

This sequence belongs to the ketol-acid reductoisomerase family. Mg(2+) serves as cofactor.

It carries out the reaction (2R)-2,3-dihydroxy-3-methylbutanoate + NADP(+) = (2S)-2-acetolactate + NADPH + H(+). It catalyses the reaction (2R,3R)-2,3-dihydroxy-3-methylpentanoate + NADP(+) = (S)-2-ethyl-2-hydroxy-3-oxobutanoate + NADPH + H(+). The protein operates within amino-acid biosynthesis; L-isoleucine biosynthesis; L-isoleucine from 2-oxobutanoate: step 2/4. Its pathway is amino-acid biosynthesis; L-valine biosynthesis; L-valine from pyruvate: step 2/4. Functionally, involved in the biosynthesis of branched-chain amino acids (BCAA). Catalyzes an alkyl-migration followed by a ketol-acid reduction of (S)-2-acetolactate (S2AL) to yield (R)-2,3-dihydroxy-isovalerate. In the isomerase reaction, S2AL is rearranged via a Mg-dependent methyl migration to produce 3-hydroxy-3-methyl-2-ketobutyrate (HMKB). In the reductase reaction, this 2-ketoacid undergoes a metal-dependent reduction by NADPH to yield (R)-2,3-dihydroxy-isovalerate. In Escherichia coli O8 (strain IAI1), this protein is Ketol-acid reductoisomerase (NADP(+)).